We begin with the raw amino-acid sequence, 439 residues long: Serine/threonine-protein kinase 2 (439 aa).

Positions 87-439 constitute a Protein kinase domain; that stretch reads NDDFYHISTG…IFSDWINGGN (353 aa). ATP-binding positions include 93–101 and lysine 117; that span reads ISTGGYGIV. Aspartate 307 acts as the Proton acceptor in catalysis.

Belongs to the protein kinase superfamily. Ser/Thr protein kinase family. Post-translationally, phosphorylated in vivo. Autophosphorylated in vitro.

It is found in the host endoplasmic reticulum. It localises to the host endoplasmic reticulum-Golgi intermediate compartment. The enzyme catalyses L-seryl-[protein] + ATP = O-phospho-L-seryl-[protein] + ADP + H(+). The catalysed reaction is L-threonyl-[protein] + ATP = O-phospho-L-threonyl-[protein] + ADP + H(+). Functionally, essential serine-protein kinase involved in the early stage of virion morphogenesis. This is Serine/threonine-protein kinase 2 (OPG054) from Bos taurus (Bovine).